Here is a 408-residue protein sequence, read N- to C-terminus: 3-phosphoshikimate 1-carboxyvinyltransferase (408 aa).

Residues Lys-20, Ser-21, and Arg-25 each coordinate 3-phosphoshikimate. Lys-20 is a phosphoenolpyruvate binding site. Arg-111 lines the phosphoenolpyruvate pocket. Ser-151, Ser-152, Gln-153, Ser-178, Asp-293, and Lys-320 together coordinate 3-phosphoshikimate. Residue Gln-153 participates in phosphoenolpyruvate binding. The Proton acceptor role is filled by Asp-293. Phosphoenolpyruvate is bound by residues Arg-324, Arg-365, and Lys-389.

The protein belongs to the EPSP synthase family. As to quaternary structure, monomer.

It is found in the cytoplasm. It carries out the reaction 3-phosphoshikimate + phosphoenolpyruvate = 5-O-(1-carboxyvinyl)-3-phosphoshikimate + phosphate. It functions in the pathway metabolic intermediate biosynthesis; chorismate biosynthesis. In terms of biological role, catalyzes the transfer of the enolpyruvyl moiety of phosphoenolpyruvate (PEP) to the 5-hydroxyl of shikimate-3-phosphate (S3P) to produce enolpyruvyl shikimate-3-phosphate and inorganic phosphate. The polypeptide is 3-phosphoshikimate 1-carboxyvinyltransferase (Sulfurisphaera tokodaii (strain DSM 16993 / JCM 10545 / NBRC 100140 / 7) (Sulfolobus tokodaii)).